The sequence spans 239 residues: Ribose-5-phosphate isomerase A (239 aa).

Residues 40-43, 96-99, and 110-113 contribute to the substrate site; these read SGST, DGAD, and KGGG. The Proton acceptor role is filled by E119. K137 is a binding site for substrate.

This sequence belongs to the ribose 5-phosphate isomerase family. In terms of assembly, homodimer.

It catalyses the reaction aldehydo-D-ribose 5-phosphate = D-ribulose 5-phosphate. It functions in the pathway carbohydrate degradation; pentose phosphate pathway; D-ribose 5-phosphate from D-ribulose 5-phosphate (non-oxidative stage): step 1/1. Catalyzes the reversible conversion of ribose-5-phosphate to ribulose 5-phosphate. The protein is Ribose-5-phosphate isomerase A of Methanococcus maripaludis (strain C5 / ATCC BAA-1333).